Reading from the N-terminus, the 273-residue chain is Inactive endochitinase At2g43600 (273 aa).

The signal sequence occupies residues 1–22 (MTIKNVIFSLFILAILAETVFS). The 39-residue stretch at 23 to 61 (QNCMDTSCPGLKECCSRWGFCGTKDEYCGFFCFSGPCNI) folds into the Chitin-binding type-1 domain. 4 cysteine pairs are disulfide-bonded: Cys-25/Cys-37, Cys-30/Cys-43, Cys-36/Cys-50, and Cys-54/Cys-59. Residues 78–273 (GKIETVITSA…GVTPDQGLDC (196 aa)) form a catalytic region. An N-linked (GlcNAc...) asparagine glycan is attached at Asn-99.

This sequence belongs to the glycosyl hydrolase 19 family. Chitinase class I subfamily.

The polypeptide is Inactive endochitinase At2g43600 (Arabidopsis thaliana (Mouse-ear cress)).